Reading from the N-terminus, the 589-residue chain is MKQIRRWQRILILALLSISVFAPLIFVSNRLKSITPVGRREFIEELSKIRFTTNDLRLSAIEHEDGEGLKGPRLILFKDGEFNSSAESDGGNTYKNREEQVIVSQKMTVSSDEKGQILPTVNQLANKTDFKPPLSKGEKNTRVQPDRATDVKTKEIRDKIIQAKAYLNFAPPGSNSQVVKELRGRLKELERSVGDATKDKDLSKGALRRVKPMENVLYKASRVFNNCPAIATKLRAMNYNTEEQVQAQKNQAAYLMQLAARTTPKGLHCLSMRLTSEYFSLDPEKRQMPNQQNYFDANFNHYVVFSDNVLASSVVVNSTISSSKEPERIVFHVVTDSLNYPAISMWFLLNIQSKATIQILNIDDMDVLPRDYDQLLMKQNSNDPRFISTLNHARFYLPDIFPGLNKMVLLDHDVVVQRDLSRLWSIDMKGKVVGAVETCLEGESSFRSMSTFINFSDTWVAGKFSPRACTWAFGMNLIDLEEWRIRKLTSTYIKYFNLGTKRPLWKAGSLPIGWLTFYRQTLALDKRWHVMGLGRESGVKAVDIEQAAVIHYDGVMKPWLDIGKENYKRYWNIHVPYHHTYLQQCNLQA.

The Cytoplasmic portion of the chain corresponds to 1-6; it reads MKQIRR. Residues 7-27 form a helical; Signal-anchor for type II membrane protein membrane-spanning segment; sequence WQRILILALLSISVFAPLIFV. Over 28–589 the chain is Lumenal; the sequence is SNRLKSITPV…TYLQQCNLQA (562 aa). 2 N-linked (GlcNAc...) asparagine glycosylation sites follow: N83 and N126. The interval 127 to 151 is disordered; the sequence is KTDFKPPLSKGEKNTRVQPDRATDV. Over residues 136-151 the composition is skewed to basic and acidic residues; the sequence is KGEKNTRVQPDRATDV. N317 and N454 each carry an N-linked (GlcNAc...) asparagine glycan.

Belongs to the glycosyltransferase 8 family. In terms of tissue distribution, expressed in roots, inflorescences, siliques, leaves and stems.

It is found in the golgi apparatus membrane. Its pathway is glycan metabolism; pectin biosynthesis. Probably involved in pectin biosynthesis in cell walls. The chain is Probable galacturonosyltransferase 6 (GAUT6) from Arabidopsis thaliana (Mouse-ear cress).